Consider the following 190-residue polypeptide: Thioredoxin F-type, chloroplastic (190 aa).

Residues 1 to 31 form a disordered region; sequence MALHLSLSHQSWTSPAHPITSSDPTRSSVPG. The N-terminal 77 residues, 1-77, are a transit peptide targeting the chloroplast; sequence MALHLSLSHQ…SMEQALGTQE (77 aa). Residues 7-30 are compositionally biased toward polar residues; the sequence is LSHQSWTSPAHPITSSDPTRSSVP. One can recognise a Thioredoxin domain in the interval 78-189; that stretch reads MEAIVGKVTE…LLEAIQAARS (112 aa). Active-site nucleophile residues include Cys-114 and Cys-117. Cys-114 and Cys-117 are oxidised to a cystine.

This sequence belongs to the thioredoxin family. Plant F-type subfamily. In terms of assembly, forms a complex with heterodimeric ferredoxin-thioredoxin reductase (FTR) and ferredoxin.

Its subcellular location is the plastid. It is found in the chloroplast. Functionally, participates in various redox reactions through the reversible oxidation of the active center dithiol to a disulfide. The F form is known to activate a number of enzymes of the photosynthetic carbon cycle. This Spinacia oleracea (Spinach) protein is Thioredoxin F-type, chloroplastic.